A 51-amino-acid polypeptide reads, in one-letter code: Protein Tat (51 aa).

Over residues 1-25 (EAETATKSCSGRQANQVSLPKQPAS) the composition is skewed to polar residues. Residues 1 to 51 (EAETATKSCSGRQANQVSLPKQPASQPRGDPTGPKESKKKVETETETDPVN) form a disordered region. Lys21 participates in a covalent cross-link: Glycyl lysine isopeptide (Lys-Gly) (interchain with G-Cter in ubiquitin). The short motif at 28 to 30 (RGD) is the Cell attachment site element. A compositionally biased stretch (basic and acidic residues) spans 33-43 (GPKESKKKVET).

It belongs to the lentiviruses Tat family. Interacts with host CCNT1. Associates with the P-TEFb complex composed at least of Tat, P-TEFb (CDK9 and CCNT1), TAR RNA, RNA Pol II. Recruits the HATs CREBBP, TAF1/TFIID, EP300, PCAF and GCN5L2. Interacts with host KAT5/Tip60; this interaction targets the latter to degradation. Interacts with the host deacetylase SIRT1. Interacts with host capping enzyme RNGTT; this interaction stimulates RNGTT. Binds to host KDR, and to the host integrins ITGAV/ITGB3 and ITGA5/ITGB1. Interacts with host KPNB1/importin beta-1 without previous binding to KPNA1/importin alpha-1. Interacts with EIF2AK2. Interacts with host nucleosome assembly protein NAP1L1; this interaction may be required for the transport of Tat within the nucleus, since the two proteins interact at the nuclear rim. Interacts with host C1QBP/SF2P32; this interaction involves lysine-acetylated Tat. Interacts with the host chemokine receptors CCR2, CCR3 and CXCR4. Interacts with host DPP4/CD26; this interaction may trigger an anti-proliferative effect. Interacts with host LDLR. Interacts with the host extracellular matrix metalloproteinase MMP1. Interacts with host PRMT6; this interaction mediates Tat's methylation. Interacts with, and is ubiquitinated by MDM2/Hdm2. Interacts with host PSMC3 and HTATIP2. Interacts with STAB1; this interaction may overcome SATB1-mediated repression of IL2 and IL2RA (interleukin) in T cells by binding to the same domain than HDAC1. Interacts (when acetylated) with human CDK13, thereby increasing HIV-1 mRNA splicing and promoting the production of the doubly spliced HIV-1 protein Nef. In terms of processing, acetylation by EP300, CREBBP, GCN5L2/GCN5 and PCAF regulates the transactivation activity of Tat. Post-translationally, phosphorylated by EIF2AK2 on serine and threonine residues adjacent to the basic region important for TAR RNA binding and function. Phosphorylation of Tat by EIF2AK2 is dependent on the prior activation of EIF2AK2 by dsRNA. Asymmetrical arginine methylation by host PRMT6 seems to diminish the transactivation capacity of Tat and affects the interaction with host CCNT1. In terms of processing, polyubiquitination by MDM2 does not target Tat to degradation, but activates its transactivation function and fosters interaction with CCNT1 and TAR RNA.

The protein localises to the host nucleus. The protein resides in the host nucleolus. Its subcellular location is the host cytoplasm. It is found in the secreted. Its function is as follows. Transcriptional activator that increases RNA Pol II processivity, thereby increasing the level of full-length viral transcripts. Recognizes a hairpin structure at the 5'-LTR of the nascent viral mRNAs referred to as the transactivation responsive RNA element (TAR) and recruits the cyclin T1-CDK9 complex (P-TEFb complex) that will in turn hyperphosphorylate the RNA polymerase II to allow efficient elongation. The CDK9 component of P-TEFb and other Tat-activated kinases hyperphosphorylate the C-terminus of RNA Pol II that becomes stabilized and much more processive. Other factors such as HTATSF1/Tat-SF1, SUPT5H/SPT5, and HTATIP2 are also important for Tat's function. Besides its effect on RNA Pol II processivity, Tat induces chromatin remodeling of proviral genes by recruiting the histone acetyltransferases (HATs) CREBBP, EP300 and PCAF to the chromatin. This also contributes to the increase in proviral transcription rate, especially when the provirus integrates in transcriptionally silent region of the host genome. To ensure maximal activation of the LTR, Tat mediates nuclear translocation of NF-kappa-B by interacting with host RELA. Through its interaction with host TBP, Tat may also modulate transcription initiation. Tat can reactivate a latently infected cell by penetrating in it and transactivating its LTR promoter. In the cytoplasm, Tat is thought to act as a translational activator of HIV-1 mRNAs. Functionally, extracellular circulating Tat can be endocytosed by surrounding uninfected cells via the binding to several surface receptors such as CD26, CXCR4, heparan sulfate proteoglycans (HSPG) or LDLR. Neurons are rarely infected, but they internalize Tat via their LDLR. Endosomal low pH allows Tat to cross the endosome membrane to enter the cytosol and eventually further translocate into the nucleus, thereby inducing severe cell dysfunctions ranging from cell activation to cell death. Through its interaction with nuclear HATs, Tat is potentially able to control the acetylation-dependent cellular gene expression. Tat seems to inhibit the HAT activity of KAT5/Tip60 and TAF1, and consequently modify the expression of specific cellular genes. Modulates the expression of many cellular genes involved in cell survival, proliferation or in coding for cytokines (such as IL10) or cytokine receptors. May be involved in the derepression of host interleukin IL2 expression. Mediates the activation of cyclin-dependent kinases and dysregulation of microtubule network. Tat plays a role in T-cell and neurons apoptosis. Tat induced neurotoxicity and apoptosis probably contribute to neuroAIDS. Host extracellular matrix metalloproteinase MMP1 cleaves Tat and decreases Tat's mediated neurotoxicity. Circulating Tat also acts as a chemokine-like and/or growth factor-like molecule that binds to specific receptors on the surface of the cells, affecting many cellular pathways. In the vascular system, Tat binds to ITGAV/ITGB3 and ITGA5/ITGB1 integrins dimers at the surface of endothelial cells and competes with bFGF for heparin-binding sites, leading to an excess of soluble bFGF. Binds to KDR/VEGFR-2. All these Tat-mediated effects enhance angiogenesis in Kaposi's sarcoma lesions. In Homo sapiens (Human), this protein is Protein Tat.